A 325-amino-acid polypeptide reads, in one-letter code: dITP/XTP pyrophosphatase (325 aa).

The interval 1-128 (MKEKIYEYKD…KKVSELGDTI (128 aa)) is unknown. The tract at residues 129–324 (LIATRNEGKT…MEVFPAWQNA (196 aa)) is NTP pyrophosphatase. Substrate is bound at residue 132 to 137 (TRNEGK). Mg(2+) is bound by residues Glu-165 and Asp-194. Asp-194 acts as the Proton acceptor in catalysis. Residues Ser-195, 278–281 (FGYD), Lys-301, and 306–307 (HR) contribute to the substrate site.

It belongs to the HAM1 NTPase family. As to quaternary structure, homodimer. Requires Mg(2+) as cofactor.

It carries out the reaction XTP + H2O = XMP + diphosphate + H(+). The enzyme catalyses dITP + H2O = dIMP + diphosphate + H(+). It catalyses the reaction ITP + H2O = IMP + diphosphate + H(+). In terms of biological role, pyrophosphatase that catalyzes the hydrolysis of nucleoside triphosphates to their monophosphate derivatives, with a high preference for the non-canonical purine nucleotides XTP (xanthosine triphosphate), dITP (deoxyinosine triphosphate) and ITP. Seems to function as a house-cleaning enzyme that removes non-canonical purine nucleotides from the nucleotide pool, thus preventing their incorporation into DNA/RNA and avoiding chromosomal lesions. In Streptococcus mutans serotype c (strain ATCC 700610 / UA159), this protein is dITP/XTP pyrophosphatase.